The primary structure comprises 128 residues: Ribonuclease P protein component (128 aa).

Belongs to the RnpA family. As to quaternary structure, consists of a catalytic RNA component (M1 or rnpB) and a protein subunit.

The enzyme catalyses Endonucleolytic cleavage of RNA, removing 5'-extranucleotides from tRNA precursor.. Its function is as follows. RNaseP catalyzes the removal of the 5'-leader sequence from pre-tRNA to produce the mature 5'-terminus. It can also cleave other RNA substrates such as 4.5S RNA. The protein component plays an auxiliary but essential role in vivo by binding to the 5'-leader sequence and broadening the substrate specificity of the ribozyme. The polypeptide is Ribonuclease P protein component (Prochlorococcus marinus (strain MIT 9313)).